Here is a 113-residue protein sequence, read N- to C-terminus: Small ribosomal subunit protein bS6 (113 aa).

This sequence belongs to the bacterial ribosomal protein bS6 family.

Its function is as follows. Binds together with bS18 to 16S ribosomal RNA. The polypeptide is Small ribosomal subunit protein bS6 (Vesicomyosocius okutanii subsp. Calyptogena okutanii (strain HA)).